We begin with the raw amino-acid sequence, 430 residues long: Adenylosuccinate synthetase (430 aa).

Residues 12 to 18 and 40 to 42 contribute to the GTP site; these read GDEGKGK and GHT. Catalysis depends on aspartate 13, which acts as the Proton acceptor. Aspartate 13 and glycine 40 together coordinate Mg(2+). Residues 13 to 16, 38 to 41, threonine 130, arginine 144, glutamine 224, threonine 239, and arginine 303 each bind IMP; these read DEGK and NAGH. Histidine 41 (proton donor) is an active-site residue. Residue 299-305 participates in substrate binding; sequence TVTSRKR. GTP contacts are provided by residues arginine 305, 331–333, and 413–415; these read KLD and STS.

This sequence belongs to the adenylosuccinate synthetase family. In terms of assembly, homodimer. Requires Mg(2+) as cofactor.

It localises to the cytoplasm. The catalysed reaction is IMP + L-aspartate + GTP = N(6)-(1,2-dicarboxyethyl)-AMP + GDP + phosphate + 2 H(+). It participates in purine metabolism; AMP biosynthesis via de novo pathway; AMP from IMP: step 1/2. Functionally, plays an important role in the de novo pathway of purine nucleotide biosynthesis. Catalyzes the first committed step in the biosynthesis of AMP from IMP. This chain is Adenylosuccinate synthetase, found in Pelagibacter ubique (strain HTCC1062).